Here is a 283-residue protein sequence, read N- to C-terminus: BTB/POZ domain-containing protein KCTD15 (283 aa).

Residues 1-32 (MPHRKERPSGSSLHTHGSTGTAEGGNMSRLSL) form a disordered region. Positions 9 to 21 (SGSSLHTHGSTGT) are enriched in low complexity. Residues S31, S35, and S38 each carry the phosphoserine modification. In terms of domain architecture, BTB spans 56–126 (APVHIDVGGH…LRTSKLLLPD (71 aa)).

Forms oligomers, predominantly homopentamers. Interacts with KCTD1, probably forming heteropentamers depending on its abundance in a cell-type dependent manner. Interacts with TFAP2A; this interaction inhibits TFAP2A transcriptional activation.

Its subcellular location is the nucleus. In terms of biological role, during embryonic development, it is involved in neural crest formation. Inhibits AP2 transcriptional activity by interaction with its activation domain. The protein is BTB/POZ domain-containing protein KCTD15 (KCTD15) of Homo sapiens (Human).